A 607-amino-acid polypeptide reads, in one-letter code: Chaperone protein DnaK (607 aa).

Residue threonine 174 is modified to Phosphothreonine; by autocatalysis. The span at 579-592 (AQAQAQQQAGANAG) shows a compositional bias: low complexity. A disordered region spans residues 579-607 (AQAQAQQQAGANAGSDKKDEDVAEAEVVD).

The protein belongs to the heat shock protein 70 family.

In terms of biological role, acts as a chaperone. This chain is Chaperone protein DnaK, found in Fusobacterium nucleatum subsp. nucleatum (strain ATCC 25586 / DSM 15643 / BCRC 10681 / CIP 101130 / JCM 8532 / KCTC 2640 / LMG 13131 / VPI 4355).